A 151-amino-acid chain; its full sequence is 3-hydroxyacyl-[acyl-carrier-protein] dehydratase FabZ (151 aa).

His-56 is a catalytic residue.

This sequence belongs to the thioester dehydratase family. FabZ subfamily.

It localises to the cytoplasm. It catalyses the reaction a (3R)-hydroxyacyl-[ACP] = a (2E)-enoyl-[ACP] + H2O. Its function is as follows. Involved in unsaturated fatty acids biosynthesis. Catalyzes the dehydration of short chain beta-hydroxyacyl-ACPs and long chain saturated and unsaturated beta-hydroxyacyl-ACPs. The protein is 3-hydroxyacyl-[acyl-carrier-protein] dehydratase FabZ of Rhodopseudomonas palustris (strain ATCC BAA-98 / CGA009).